The sequence spans 276 residues: uncharacterized protein (276 aa).

15–22 (GKGGVGKS) contacts ATP. 2 consecutive 4Fe-4S ferredoxin-type domains span residues 68–96 (EIYEINDDCIRCGKCLDVCQFDAIGDFKI) and 92–121 (GDFKINPILCEGCGACELICEFDAIEPIKR). 8 residues coordinate [4Fe-4S] cluster: Cys76, Cys79, Cys82, Cys86, Cys101, Cys104, Cys107, and Cys111.

This is an uncharacterized protein from Methanocaldococcus jannaschii (strain ATCC 43067 / DSM 2661 / JAL-1 / JCM 10045 / NBRC 100440) (Methanococcus jannaschii).